Consider the following 742-residue polypeptide: Polyphosphate kinase (742 aa).

Asparagine 91 provides a ligand contact to ATP. The Mg(2+) site is built by arginine 431 and arginine 461. Histidine 491 functions as the Phosphohistidine intermediate in the catalytic mechanism. The ATP site is built by tyrosine 524, arginine 624, and histidine 652. The tract at residues 718–742 (WTASPQEGHSVRDHQESLMERHRSP) is disordered. Residues 726-742 (HSVRDHQESLMERHRSP) are compositionally biased toward basic and acidic residues.

The protein belongs to the polyphosphate kinase 1 (PPK1) family. Requires Mg(2+) as cofactor. In terms of processing, an intermediate of this reaction is the autophosphorylated ppk in which a phosphate is covalently linked to a histidine residue through a N-P bond.

It carries out the reaction [phosphate](n) + ATP = [phosphate](n+1) + ADP. Catalyzes the reversible transfer of the terminal phosphate of ATP to form a long-chain polyphosphate (polyP). This chain is Polyphosphate kinase, found in Mycobacterium bovis (strain ATCC BAA-935 / AF2122/97).